Reading from the N-terminus, the 343-residue chain is UDP-N-acetylglucosamine--N-acetylmuramyl-(pentapeptide) pyrophosphoryl-undecaprenol N-acetylglucosamine transferase (343 aa).

UDP-N-acetyl-alpha-D-glucosamine-binding positions include 10–12, Asn113, Ser174, and Gln275; that span reads TGG.

It belongs to the glycosyltransferase 28 family. MurG subfamily.

The protein resides in the cell membrane. The enzyme catalyses di-trans,octa-cis-undecaprenyl diphospho-N-acetyl-alpha-D-muramoyl-L-alanyl-D-glutamyl-meso-2,6-diaminopimeloyl-D-alanyl-D-alanine + UDP-N-acetyl-alpha-D-glucosamine = di-trans,octa-cis-undecaprenyl diphospho-[N-acetyl-alpha-D-glucosaminyl-(1-&gt;4)]-N-acetyl-alpha-D-muramoyl-L-alanyl-D-glutamyl-meso-2,6-diaminopimeloyl-D-alanyl-D-alanine + UDP + H(+). It participates in cell wall biogenesis; peptidoglycan biosynthesis. Cell wall formation. Catalyzes the transfer of a GlcNAc subunit on undecaprenyl-pyrophosphoryl-MurNAc-pentapeptide (lipid intermediate I) to form undecaprenyl-pyrophosphoryl-MurNAc-(pentapeptide)GlcNAc (lipid intermediate II). In Wolbachia sp. subsp. Drosophila simulans (strain wRi), this protein is UDP-N-acetylglucosamine--N-acetylmuramyl-(pentapeptide) pyrophosphoryl-undecaprenol N-acetylglucosamine transferase.